The sequence spans 290 residues: ATP synthase gamma chain (290 aa).

This sequence belongs to the ATPase gamma chain family. As to quaternary structure, F-type ATPases have 2 components, CF(1) - the catalytic core - and CF(0) - the membrane proton channel. CF(1) has five subunits: alpha(3), beta(3), gamma(1), delta(1), epsilon(1). CF(0) has three main subunits: a, b and c.

The protein localises to the cell inner membrane. Produces ATP from ADP in the presence of a proton gradient across the membrane. The gamma chain is believed to be important in regulating ATPase activity and the flow of protons through the CF(0) complex. The chain is ATP synthase gamma chain from Paracoccus denitrificans (strain Pd 1222).